Here is a 154-residue protein sequence, read N- to C-terminus: Style cell-cycle inhibitor 1-A (154 aa).

2 stretches are compositionally biased toward basic and acidic residues: residues 1-11 (MGSDKKTPEEK) and 24-48 (DEVKSKRQNIKGDEERRKEKKDKSK). A disordered region spans residues 1–84 (MGSDKKTPEE…DKSKNKFEEL (84 aa)). Residues 63–77 (GEKHKTKSHKHKDKS) are compositionally biased toward basic residues.

As to expression, specifically expressed in flowers pistils, especially in stigmas and styles. Barely detected in roots, stems, leaves, sepals, petals and stamen.

The protein resides in the nucleus. Functionally, component of the auxin signaling transduction pathway that regulates cell proliferation and differentiation during flowers stigmas and styles development. Involved in the regulation of auxin-related genes. This is Style cell-cycle inhibitor 1-A from Nicotiana tabacum (Common tobacco).